We begin with the raw amino-acid sequence, 61 residues long: Adipokinetic prohormone type 2 (61 aa).

An N-terminal signal peptide occupies residues 1 to 22 (MTQSCTLTLVLVVAVLAALATA). Glutamine 23 carries the pyrrolidone carboxylic acid modification. Tryptophan 30 is modified (tryptophan amide).

This sequence belongs to the AKH/HRTH/RPCH family. In terms of assembly, adipokinetic hormone precursor-related peptide (APRP) can form three type of disulfide-bond dimers: p1 (alpha-alpha), p2 (alpha-beta), and p3 (beta-beta).

It localises to the secreted. This hormone, released from cells in the corpora cardiaca, causes release of diglycerides from the fat body and stimulation of muscles to use these diglycerides as an energy source during energy-demanding processes. This chain is Adipokinetic prohormone type 2, found in Locusta migratoria (Migratory locust).